The sequence spans 87 residues: Small ribosomal subunit protein bS20 (87 aa).

Belongs to the bacterial ribosomal protein bS20 family.

In terms of biological role, binds directly to 16S ribosomal RNA. The chain is Small ribosomal subunit protein bS20 from Clostridium perfringens (strain ATCC 13124 / DSM 756 / JCM 1290 / NCIMB 6125 / NCTC 8237 / Type A).